We begin with the raw amino-acid sequence, 1361 residues long: Protein CFT1 (1361 aa).

The tract at residues 455–493 (AAYNNEDDDDDDDDFNLYSDEENDQVNNKNDRTFGTNES) is disordered. The segment covering 459–478 (NEDDDDDDDDFNLYSDEEND) has biased composition (acidic residues). Residues 479 to 493 (QVNNKNDRTFGTNES) are compositionally biased toward polar residues.

This sequence belongs to the CFT1 family.

Its subcellular location is the nucleus. In terms of biological role, RNA-binding component of the cleavage and polyadenylation factor (CPF) complex, which plays a key role in polyadenylation-dependent pre-mRNA 3'-end formation and cooperates with cleavage factors including the CFIA complex and NAB4/CFIB. Involved in poly(A) site recognition. May be involved in coupling transcription termination and mRNA 3'-end formation. The protein is Protein CFT1 (CFT1) of Candida glabrata (strain ATCC 2001 / BCRC 20586 / JCM 3761 / NBRC 0622 / NRRL Y-65 / CBS 138) (Yeast).